The primary structure comprises 465 residues: Hexokinase type 1 (465 aa).

In terms of domain architecture, Hexokinase spans 8–447 (EEDFPEVYKV…CGVGAAIMAG (440 aa)). Positions 65 to 197 (TGRERGQFLA…EISVDVMGII (133 aa)) are hexokinase small subdomain. Lys88 is an ATP binding site. Residues 139–165 (PLGIAFAFTLKKLALDVGILVSWTKEF) are glucose-binding. Residues 198-436 (NVGAGSLLAL…YNFEFVITQD (239 aa)) form a hexokinase large subdomain region.

Belongs to the hexokinase family.

It catalyses the reaction a D-hexose + ATP = a D-hexose 6-phosphate + ADP + H(+). It carries out the reaction D-mannose + ATP = D-mannose 6-phosphate + ADP + H(+). The catalysed reaction is D-fructose + ATP = D-fructose 6-phosphate + ADP + H(+). The enzyme catalyses D-glucose + ATP = D-glucose 6-phosphate + ADP + H(+). Its pathway is carbohydrate metabolism; hexose metabolism. It participates in carbohydrate degradation; glycolysis; D-glyceraldehyde 3-phosphate and glycerone phosphate from D-glucose: step 1/4. Its function is as follows. Catalyzes the phosphorylation of various hexoses to hexose 6-phosphate. This chain is Hexokinase type 1 (Hex-t1), found in Drosophila melanogaster (Fruit fly).